The primary structure comprises 368 residues: Transcription factor TGA1 (368 aa).

Over residues 53 to 65 the composition is skewed to polar residues; the sequence is LDNNVSEDTSHGT. A disordered region spans residues 53 to 83; it reads LDNNVSEDTSHGTAGTPHMFDQEASTSRHPD. In terms of domain architecture, bZIP spans 82 to 145; sequence PDKIQRRLAQ…NGIDTNSLGF (64 aa). Coiled coils occupy residues 83-131 and 261-281; these read DKIQ…RQQG and NLKQ…EKLQ. Residues 84 to 104 are basic motif; the sequence is KIQRRLAQNREAARKSRLRKK. The leucine-zipper stretch occupies residues 110–124; that stretch reads LETSRLKLIQLEQEL. Residues 153–363 enclose the DOG1 domain; it reads IAAFEMEYGH…RALSSSWATR (211 aa). The cysteines at positions 260 and 266 are disulfide-linked.

The protein belongs to the bZIP family. Binds DNA as a dimer. The reduced form interacts with NPR1. In terms of tissue distribution, predominantly expressed in roots.

The protein resides in the nucleus. Its function is as follows. Transcriptional activator that binds specifically to the DNA sequence 5'-TGACG-3'. Recognizes ocs elements like the as-1 motif of the cauliflower mosaic virus 35S promoter. Binding to the as-1-like cis elements mediate auxin- and salicylic acid-inducible transcription. May be involved in the induction of the systemic acquired resistance (SAR) via its interaction with NPR1. Could also bind to the Hex-motif (5'-TGACGTGG-3') another cis-acting element found in plant histone promoters. This Arabidopsis thaliana (Mouse-ear cress) protein is Transcription factor TGA1 (TGA1).